A 252-amino-acid chain; its full sequence is 5-oxoprolinase subunit A (252 aa).

It belongs to the LamB/PxpA family. As to quaternary structure, forms a complex composed of PxpA, PxpB and PxpC.

The enzyme catalyses 5-oxo-L-proline + ATP + 2 H2O = L-glutamate + ADP + phosphate + H(+). Functionally, catalyzes the cleavage of 5-oxoproline to form L-glutamate coupled to the hydrolysis of ATP to ADP and inorganic phosphate. The chain is 5-oxoprolinase subunit A from Photorhabdus laumondii subsp. laumondii (strain DSM 15139 / CIP 105565 / TT01) (Photorhabdus luminescens subsp. laumondii).